A 118-amino-acid chain; its full sequence is Large ribosomal subunit protein bL20 (118 aa).

The protein belongs to the bacterial ribosomal protein bL20 family.

Its function is as follows. Binds directly to 23S ribosomal RNA and is necessary for the in vitro assembly process of the 50S ribosomal subunit. It is not involved in the protein synthesizing functions of that subunit. This chain is Large ribosomal subunit protein bL20, found in Lacticaseibacillus casei (strain BL23) (Lactobacillus casei).